The primary structure comprises 1009 residues: Type VII secretion system accessory factor EsaA (1009 aa).

Transmembrane regions (helical) follow at residues 7–27, 822–842, 869–889, 903–923, 928–948, and 979–999; these read IYAL…IFFV, ISPT…AYIF, AITS…VGLI, KFIL…TYLL, SIGM…MNNL, and IGLA…LNMF.

This sequence belongs to the EsaA family. In terms of assembly, homodimer. Interacts with EssB.

It is found in the cell membrane. Functionally, component of the type VII secretion system (Ess). Provides together with EssB and other components such as EssC and EssE a secretion platform across the cytoplasmic membrane in the host. This chain is Type VII secretion system accessory factor EsaA, found in Staphylococcus aureus (strain MRSA252).